We begin with the raw amino-acid sequence, 150 residues long: Geranyl diphosphate phosphohydrolase (150 aa).

The region spanning 14-147 is the Nudix hydrolase domain; sequence SIKVAVVVCL…DNVVQDGFNP (134 aa). A Nudix box motif is present at residues 48–69; it reads GHLEFGESFEECAARELKEETD. Residues Glu63 and Glu67 each coordinate Mg(2+).

It belongs to the Nudix hydrolase family. Expressed in petals. Little or no expression in stamens, sepals or young leaves.

The protein localises to the cytoplasm. It carries out the reaction (2E)-geranyl diphosphate + H2O = (2E)-geranyl phosphate + phosphate + H(+). In terms of biological role, involved in a cytosolic pathway for the biosynthesis of free monoterpene alcohols that contribute to fragrance. Lacks terpene synthase activity, but has a diphosphohydrolase activity with geranyl diphosphate and farnesyl diphosphate as substrates. No activity with 8-oxo-dGTP and dGTP and unable to dephosphorylate geranyl phosphate to geraniol. This is Geranyl diphosphate phosphohydrolase from Rosa hybrid cultivar.